A 91-amino-acid chain; its full sequence is Large ribosomal subunit protein bL27 (91 aa).

Residues 1-10 are compositionally biased toward gly residues; the sequence is MAQKKGGGST. The tract at residues 1 to 20 is disordered; it reads MAQKKGGGSTRNGRDSQPKM.

It belongs to the bacterial ribosomal protein bL27 family.

The protein is Large ribosomal subunit protein bL27 of Verminephrobacter eiseniae (strain EF01-2).